The following is a 439-amino-acid chain: Proline--tRNA ligase (439 aa).

It belongs to the class-II aminoacyl-tRNA synthetase family. ProS type 2 subfamily. As to quaternary structure, homodimer.

It is found in the cytoplasm. The catalysed reaction is tRNA(Pro) + L-proline + ATP = L-prolyl-tRNA(Pro) + AMP + diphosphate. Functionally, catalyzes the attachment of proline to tRNA(Pro) in a two-step reaction: proline is first activated by ATP to form Pro-AMP and then transferred to the acceptor end of tRNA(Pro). The protein is Proline--tRNA ligase of Rhodopseudomonas palustris (strain BisA53).